Reading from the N-terminus, the 724-residue chain is Cyclin-T1 (724 aa).

The residue at position 117 (serine 117) is a Phosphoserine. Residues 253–270 (KRIRNWRAYQAAMKTKPD) carry the Nuclear localization signal motif. Lysine 342 participates in a covalent cross-link: Glycyl lysine isopeptide (Lys-Gly) (interchain with G-Cter in SUMO2). The stretch at 384–425 (SAKVSLKEYRAKHAEELAAQKRQLENMEANVKSQYAYAAQNL) forms a coiled coil. At serine 388 the chain carries Phosphoserine. An N6-acetyllysine modification is found at lysine 390. A Glycyl lysine isopeptide (Lys-Gly) (interchain with G-Cter in SUMO2) cross-link involves residue lysine 415. ADP-ribosylserine occurs at positions 416, 473, and 474. The tract at residues 479–549 (IKMRIKVHSA…RPSDPKHSSQ (71 aa)) is histidine-rich domain (HRD). Residue lysine 480 forms a Glycyl lysine isopeptide (Lys-Gly) (interchain with G-Cter in SUMO2) linkage. The segment covering 483–507 (IKVHSAGDKHNSIEDSVTKSREHKE) has biased composition (basic and acidic residues). 2 disordered regions span residues 483-586 (IKVH…VFDH) and 691-724 (PRAG…PLPK). Residue lysine 484 is modified to N6-(ADP-ribosyl)lysine. Histidine 486 is subject to ADP-ribosylhistidine. Serine 494 and serine 498 each carry phosphoserine. Over residues 508–529 (KQRTHPSNHHHHHNHHSHRHSH) the composition is skewed to basic residues. Histidine 529 is modified (ADP-ribosylhistidine). ADP-ribosylserine occurs at positions 548 and 551. Histidine 555 bears the ADP-ribosylhistidine mark. A compositionally biased stretch (low complexity) spans 559–569 (SLSSTLSSSSS). Serine 562 is modified (ADP-ribosylserine). A compositionally biased stretch (pro residues) spans 708–724 (PPPLPSEPPPPLPPLPK).

The protein belongs to the cyclin family. Cyclin C subfamily. As to quaternary structure, cyclin-T1 is the predominant cyclin that associates with CDK9 to form a heterodimer called P-TEFb. P-TEFb forms a complex with AFF4/AF5Q31. Component of a complex which is at least composed of HTATSF1/Tat-SF1, P-TEFb complex, RNA pol II, SUPT5H, and NCL/nucleolin. Component of the 7SK snRNP complex at least composed of P-TEFb (composed of CDK9 and CCNT1/cyclin-T1), HEXIM1, HEXIM2, BCDIN3, SART3 proteins and 7SK and U6 snRNAs. Interacts (via central region) with ZMYND8 (via N-terminus); the interaction is direct and the association appears to occur between homodimeric ZMYND8 and the activated form of the P-TEFb complex. Interacts with BRD4, targets chromatin binding. Interacts with JMJD6. Interacts with MDFIC. Interacts with HSF1. Interacts with HTATSF1. Interacts with TBX21. In terms of processing, ADP-ribosylation on serine residues by PARP1 in response to DNA damage disrupts the phase separation activity of CCNT1, thereby preventing activation of CDK9.

Its subcellular location is the nucleus. Its function is as follows. Regulatory subunit of the cyclin-dependent kinase pair (CDK9/cyclin-T1) complex, also called positive transcription elongation factor B (P-TEFb), which facilitates the transition from abortive to productive elongation by phosphorylating the CTD (C-terminal domain) of the large subunit of RNA polymerase II (RNA Pol II). Required to activate the protein kinase activity of CDK9: acts by mediating formation of liquid-liquid phase separation (LLPS) that enhances binding of P-TEFb to the CTD of RNA Pol II. The polypeptide is Cyclin-T1 (Ccnt1) (Mus musculus (Mouse)).